The sequence spans 600 residues: Elongation factor 4 (600 aa).

A tr-type G domain is found at 5 to 187; the sequence is SHIRNFSIVA…ALVNRLPCPE (183 aa). Residues 17–22 and 134–137 each bind GTP; these read DHGKST and NKID.

The protein belongs to the TRAFAC class translation factor GTPase superfamily. Classic translation factor GTPase family. LepA subfamily.

The protein localises to the cell inner membrane. The catalysed reaction is GTP + H2O = GDP + phosphate + H(+). Its function is as follows. Required for accurate and efficient protein synthesis under certain stress conditions. May act as a fidelity factor of the translation reaction, by catalyzing a one-codon backward translocation of tRNAs on improperly translocated ribosomes. Back-translocation proceeds from a post-translocation (POST) complex to a pre-translocation (PRE) complex, thus giving elongation factor G a second chance to translocate the tRNAs correctly. Binds to ribosomes in a GTP-dependent manner. This chain is Elongation factor 4, found in Paramagnetospirillum magneticum (strain ATCC 700264 / AMB-1) (Magnetospirillum magneticum).